The following is a 415-amino-acid chain: Serine hydroxymethyltransferase (415 aa).

Residues L122 and 126-128 (GHL) each bind (6S)-5,6,7,8-tetrahydrofolate. Position 230 is an N6-(pyridoxal phosphate)lysine (K230).

This sequence belongs to the SHMT family. As to quaternary structure, homodimer. It depends on pyridoxal 5'-phosphate as a cofactor.

The protein resides in the cytoplasm. The catalysed reaction is (6R)-5,10-methylene-5,6,7,8-tetrahydrofolate + glycine + H2O = (6S)-5,6,7,8-tetrahydrofolate + L-serine. The protein operates within one-carbon metabolism; tetrahydrofolate interconversion. It participates in amino-acid biosynthesis; glycine biosynthesis; glycine from L-serine: step 1/1. Functionally, catalyzes the reversible interconversion of serine and glycine with tetrahydrofolate (THF) serving as the one-carbon carrier. This reaction serves as the major source of one-carbon groups required for the biosynthesis of purines, thymidylate, methionine, and other important biomolecules. Also exhibits THF-independent aldolase activity toward beta-hydroxyamino acids, producing glycine and aldehydes, via a retro-aldol mechanism. The protein is Serine hydroxymethyltransferase of Cupriavidus taiwanensis (strain DSM 17343 / BCRC 17206 / CCUG 44338 / CIP 107171 / LMG 19424 / R1) (Ralstonia taiwanensis (strain LMG 19424)).